An 88-amino-acid chain; its full sequence is Large ribosomal subunit protein bL31B (88 aa).

The protein belongs to the bacterial ribosomal protein bL31 family. Type B subfamily. As to quaternary structure, part of the 50S ribosomal subunit.

This chain is Large ribosomal subunit protein bL31B, found in Glaesserella parasuis serovar 5 (strain SH0165) (Haemophilus parasuis).